We begin with the raw amino-acid sequence, 447 residues long: tRNA threonylcarbamoyladenosine dehydratase 2 (447 aa).

Transmembrane regions (helical) follow at residues 9–29 (LITA…YAWT), 86–106 (NQYV…NSLV), and 294–314 (ILPV…TWIL).

The protein belongs to the HesA/MoeB/ThiF family.

It is found in the mitochondrion outer membrane. Catalyzes the ATP-dependent dehydration of threonylcarbamoyladenosine at position 37 (t(6)A37) to form cyclic t(6)A37 (ct(6)A37) in tRNAs that read codons beginning with adenine. In Saccharomyces cerevisiae (strain ATCC 204508 / S288c) (Baker's yeast), this protein is tRNA threonylcarbamoyladenosine dehydratase 2 (TCD2).